We begin with the raw amino-acid sequence, 228 residues long: MAPYHIRKYQDSDHRSVVNLFCRGTEEHISASFRYMLLLPGTLLILLGVPLTLFLASGSWLLVLLSTLTLLVSLWLLAKYPWEKYTAMCLHSDMADIPRTYLSSHYSCFWVAESRGQMVGIIAVLPVKDPLLQRKQLQLRHLSVSLEHRREGIGRAMVRTALQFAEMQGFSEVVLVTSMLQYAALALYQSMGFQKTGEFFYTFVSRLRNSPMICLKYCLTSALNDLKT.

The next 2 helical transmembrane spans lie at 36 to 56 and 58 to 78; these read MLLLPGTLLILLGVPLTLFLA and GSWLLVLLSTLTLLVSLWLLA. One can recognise an N-acetyltransferase domain in the interval 61-217; that stretch reads LLVLLSTLTL…RNSPMICLKY (157 aa).

Belongs to the camello family.

It is found in the nucleus membrane. The protein localises to the cytoplasm. It localises to the perinuclear region. It catalyses the reaction L-lysyl-[protein] + acetyl-CoA = N(6)-acetyl-L-lysyl-[protein] + CoA + H(+). Functionally, has histone acetyltransferase activity in vitro, with specificity for histone H4. This chain is N-acetyltransferase family 8 member 3, found in Rattus norvegicus (Rat).